The sequence spans 513 residues: 2,3-bisphosphoglycerate-independent phosphoglycerate mutase (513 aa).

Mn(2+)-binding residues include aspartate 13 and serine 63. Catalysis depends on serine 63, which acts as the Phosphoserine intermediate. Residues histidine 124, 154–155 (RD), arginine 186, arginine 192, 262–265 (RADR), and lysine 335 each bind substrate. Residues aspartate 402, histidine 406, aspartate 443, histidine 444, and histidine 462 each coordinate Mn(2+).

Belongs to the BPG-independent phosphoglycerate mutase family. Monomer. Mn(2+) serves as cofactor.

It catalyses the reaction (2R)-2-phosphoglycerate = (2R)-3-phosphoglycerate. The protein operates within carbohydrate degradation; glycolysis; pyruvate from D-glyceraldehyde 3-phosphate: step 3/5. Its function is as follows. Catalyzes the interconversion of 2-phosphoglycerate and 3-phosphoglycerate. This is 2,3-bisphosphoglycerate-independent phosphoglycerate mutase from Shewanella frigidimarina (strain NCIMB 400).